Here is a 357-residue protein sequence, read N- to C-terminus: MYPFSFDPSSKLPVTGIYNILLFNLFPLATYLVETFCFFRRWKIACTLLCSITVILAYRMCAVYHHVGYKDVSTFGLAYGFLIMMSLRTCFLSWRDMVPSRNDPVQISAVKRRRPFIRNARWNFVDYALSLRKYGWTDDVVPPYCRKVLTYKSLGIRTAVYVGAFCFVNCFKTRLSNWMLLPISANPWYIQVAFCVTSGFFSYLFINALYYLFAIIFVPLGIWDIAEYPLMMGNVSKTTSVNDFWSRDWHVCTKPYFRVIAWDPTIALTGSKFLASCSCFFLSALFHDFAYWSISGRCSPAFFFQLLIQPFLINLEKRIPLLRKYHYWVLIIEMLINGTYGMGVVLLKFKWKTCSQI.

9 consecutive transmembrane segments (helical) span residues 13–33 (PVTG…TYLV), 44–64 (IACT…CAVY), 72–92 (VSTF…TCFL), 148–168 (VLTY…FCFV), 181–201 (LPIS…SGFF), 203–223 (YLFI…LGIW), 266–286 (IALT…SALF), 293–313 (SISG…PFLI), and 327–347 (YWVL…VVLL).

The protein resides in the mitochondrion membrane. This is an uncharacterized protein from Schizosaccharomyces pombe (strain 972 / ATCC 24843) (Fission yeast).